The following is a 517-amino-acid chain: Probable anion transporter 6, chloroplastic (517 aa).

A disordered region spans residues 51–73 (TERVRESKKLPPKDPIEDPKPQL). Over residues 52–70 (ERVRESKKLPPKDPIEDPK) the composition is skewed to basic and acidic residues. The next 10 membrane-spanning stretches (helical) occupy residues 130–150 (FGWS…GYAL), 170–190 (IGVF…GFMP), 229–249 (FVFG…PPII), 255–275 (ESVF…FQFL), 312–332 (SFFQ…GSWG), 352–372 (LTEA…VTSL), 397–417 (IAFV…GLPP), 420–440 (IVGI…GLYC), 452–472 (ILLG…VALT), and 484–504 (MSLF…WLAF).

Belongs to the major facilitator superfamily. Sodium/anion cotransporter (TC 2.A.1.14) family. Expressed in leaf veins and sepals.

The protein localises to the plastid. It is found in the chloroplast membrane. In terms of biological role, inorganic phosphate and probable anion transporter. The sequence is that of Probable anion transporter 6, chloroplastic (ANTR6) from Arabidopsis thaliana (Mouse-ear cress).